Consider the following 148-residue polypeptide: Transcriptional regulator MraZ (148 aa).

SpoVT-AbrB domains lie at 7–56 (KERH…EPDI) and 85–128 (LDVV…APER).

This sequence belongs to the MraZ family. Forms oligomers.

The protein resides in the cytoplasm. Its subcellular location is the nucleoid. This Chlorobium phaeobacteroides (strain DSM 266 / SMG 266 / 2430) protein is Transcriptional regulator MraZ.